A 218-amino-acid polypeptide reads, in one-letter code: Ribosomal RNA small subunit methyltransferase G (218 aa).

S-adenosyl-L-methionine contacts are provided by residues Gly-86, Leu-91, 137–138 (AE), and Arg-153.

Belongs to the methyltransferase superfamily. RNA methyltransferase RsmG family.

It is found in the cytoplasm. It catalyses the reaction guanosine(527) in 16S rRNA + S-adenosyl-L-methionine = N(7)-methylguanosine(527) in 16S rRNA + S-adenosyl-L-homocysteine. Specifically methylates the N7 position of guanine in position 527 of 16S rRNA. The polypeptide is Ribosomal RNA small subunit methyltransferase G (Nitratidesulfovibrio vulgaris (strain ATCC 29579 / DSM 644 / CCUG 34227 / NCIMB 8303 / VKM B-1760 / Hildenborough) (Desulfovibrio vulgaris)).